We begin with the raw amino-acid sequence, 251 residues long: NADPH-dependent oxidoreductase (251 aa).

This sequence belongs to the flavin oxidoreductase frp family. It depends on FMN as a cofactor.

In terms of biological role, reduces FMN, organic nitro compounds and disulfide DTNB. Involved in maintenance of the cellular redox state and the disulfide stress response. The sequence is that of NADPH-dependent oxidoreductase (nfrA) from Staphylococcus aureus (strain USA300).